Here is a 105-residue protein sequence, read N- to C-terminus: Ig lambda-1 chain C region (105 aa).

The Ig-like domain occupies 6–100 (PSVTLFPPSS…EGHTVEKSLS (95 aa)). A disulfide bridge connects residues Cys-27 and Cys-86.

The protein is Ig lambda-1 chain C region of Mus musculus (Mouse).